We begin with the raw amino-acid sequence, 424 residues long: Phosphomethylpyrimidine synthase 2 (424 aa).

Substrate-binding positions include asparagine 65, methionine 94, tyrosine 123, histidine 162, 184 to 186, 225 to 228, and glutamate 264; these read SRG and DGLR. Histidine 268 is a binding site for Zn(2+). Tyrosine 291 is a binding site for substrate. Position 332 (histidine 332) interacts with Zn(2+). The [4Fe-4S] cluster site is built by cysteine 408, cysteine 411, and cysteine 415.

This sequence belongs to the ThiC family. It depends on [4Fe-4S] cluster as a cofactor.

The catalysed reaction is 5-amino-1-(5-phospho-beta-D-ribosyl)imidazole + S-adenosyl-L-methionine = 4-amino-2-methyl-5-(phosphooxymethyl)pyrimidine + CO + 5'-deoxyadenosine + formate + L-methionine + 3 H(+). Its pathway is cofactor biosynthesis; thiamine diphosphate biosynthesis. In terms of biological role, catalyzes the synthesis of the hydroxymethylpyrimidine phosphate (HMP-P) moiety of thiamine from aminoimidazole ribotide (AIR) in a radical S-adenosyl-L-methionine (SAM)-dependent reaction. The polypeptide is Phosphomethylpyrimidine synthase 2 (Methanothermobacter thermautotrophicus (strain ATCC 29096 / DSM 1053 / JCM 10044 / NBRC 100330 / Delta H) (Methanobacterium thermoautotrophicum)).